We begin with the raw amino-acid sequence, 500 residues long: NAD(P)H-quinone oxidoreductase chain 4, chloroplastic (500 aa).

The next 14 membrane-spanning stretches (helical) occupy residues 4–24 (FPWLTILVVLPIFAGSLIFFL), 35–55 (YTIAICLLEFLIMTYAFCYHF), 87–107 (LGSILLTGFITTLATLAAWPV), 111–131 (SQLFYFLMLAMYSGQIGLFSS), 134–154 (LLLFFIMWELELIPVYLLLSM), 167–187 (FILYTAGGSIFFLIGVLGMGL), 211–231 (ILLYFGFLIAYAVKLPIIPLH), 242–262 (HYSTCMLLAGILLKMGAYGLI), 274–294 (YLFSPWLVIIGAVQIIYAALT), 313–333 (MGFIIIGIGSITNIGLNGAIL), 334–354 (QILSHGFIGATLFFLAGTACD), 386–406 (LALPGMSGFVAELVVFFGLIT), 417–437 (LITFVMAIGMILTPIYLLSML), and 462–482 (LFLLICIFLPVIGIGIYPDFV).

It belongs to the complex I subunit 4 family.

Its subcellular location is the plastid. It is found in the chloroplast thylakoid membrane. It carries out the reaction a plastoquinone + NADH + (n+1) H(+)(in) = a plastoquinol + NAD(+) + n H(+)(out). The enzyme catalyses a plastoquinone + NADPH + (n+1) H(+)(in) = a plastoquinol + NADP(+) + n H(+)(out). This Saccharum hybrid (Sugarcane) protein is NAD(P)H-quinone oxidoreductase chain 4, chloroplastic.